A 183-amino-acid chain; its full sequence is ATP synthase subunit delta (183 aa).

This sequence belongs to the ATPase delta chain family. F-type ATPases have 2 components, F(1) - the catalytic core - and F(0) - the membrane proton channel. F(1) has five subunits: alpha(3), beta(3), gamma(1), delta(1), epsilon(1). F(0) has three main subunits: a(1), b(2) and c(10-14). The alpha and beta chains form an alternating ring which encloses part of the gamma chain. F(1) is attached to F(0) by a central stalk formed by the gamma and epsilon chains, while a peripheral stalk is formed by the delta and b chains.

Its subcellular location is the cell inner membrane. F(1)F(0) ATP synthase produces ATP from ADP in the presence of a proton or sodium gradient. F-type ATPases consist of two structural domains, F(1) containing the extramembraneous catalytic core and F(0) containing the membrane proton channel, linked together by a central stalk and a peripheral stalk. During catalysis, ATP synthesis in the catalytic domain of F(1) is coupled via a rotary mechanism of the central stalk subunits to proton translocation. In terms of biological role, this protein is part of the stalk that links CF(0) to CF(1). It either transmits conformational changes from CF(0) to CF(1) or is implicated in proton conduction. The chain is ATP synthase subunit delta from Chloroherpeton thalassium (strain ATCC 35110 / GB-78).